Here is a 252-residue protein sequence, read N- to C-terminus: Vacuolar-sorting protein dot2 (252 aa).

Belongs to the SNF8 family. Component of the endosomal sorting complex required for transport II (ESCRT-II).

The protein resides in the cytoplasm. The protein localises to the nucleus. Its subcellular location is the endosome membrane. Component of the endosomal sorting complex required for transport II (ESCRT-II), which is required for multivesicular body (MVB) formation and sorting of endosomal cargo proteins into MVBs. The MVB pathway mediates delivery of transmembrane proteins into the lumen of the lysosome for degradation. The ESCRT-II complex is probably involved in the recruitment of the ESCRT-III complex. Negatively regulates meiotic spindle pole body maturation via indirect regulation of the pcp1 gene. Required for efficient entry into pre-meiotic S phase. In Schizosaccharomyces pombe (strain 972 / ATCC 24843) (Fission yeast), this protein is Vacuolar-sorting protein dot2 (dot2).